A 325-amino-acid chain; its full sequence is GTP 3',8-cyclase (325 aa).

A Radical SAM core domain is found at M1–A226. Residue R8 coordinates GTP. Residues C15 and C19 each coordinate [4Fe-4S] cluster. Residue Y21 participates in S-adenosyl-L-methionine binding. C22 contacts [4Fe-4S] cluster. GTP is bound at residue R60. An S-adenosyl-L-methionine-binding site is contributed by G64. A GTP-binding site is contributed by S91. S115 serves as a coordination point for S-adenosyl-L-methionine. Residue K152 participates in GTP binding. Residue M186 participates in S-adenosyl-L-methionine binding. [4Fe-4S] cluster-binding residues include C249 and C252. R254 to R256 contacts GTP. C266 provides a ligand contact to [4Fe-4S] cluster.

The protein belongs to the radical SAM superfamily. MoaA family. In terms of assembly, monomer and homodimer. It depends on [4Fe-4S] cluster as a cofactor.

The catalysed reaction is GTP + AH2 + S-adenosyl-L-methionine = (8S)-3',8-cyclo-7,8-dihydroguanosine 5'-triphosphate + 5'-deoxyadenosine + L-methionine + A + H(+). The protein operates within cofactor biosynthesis; molybdopterin biosynthesis. Functionally, catalyzes the cyclization of GTP to (8S)-3',8-cyclo-7,8-dihydroguanosine 5'-triphosphate. This is GTP 3',8-cyclase from Gloeobacter violaceus (strain ATCC 29082 / PCC 7421).